The chain runs to 249 residues: MRILISNDDGVNAPGLVALHAALADYADCVVIAPDQDKSGASSSLTLDRPLHPHTLENGFISVNGTPTDCVHLGIHGLLERQPDMVVSGINLGANLGDDVLYSGTVAAALEGRFLQRPSFAFSFLSRQPDNLATAAHYARLLVEAHEQLDLPPRTVLNVNIPNLPLEHIRGIQLTRLGHRARAAAPIRVVDPRGRAGYWIAAAGDVEDGGAGTDFHAVVQGYVSITPLQLDRTCQDGFSSLNTWLEGLR.

4 residues coordinate a divalent metal cation: Asp-8, Asp-9, Ser-39, and Asn-91.

This sequence belongs to the SurE nucleotidase family. Requires a divalent metal cation as cofactor.

It localises to the cytoplasm. It carries out the reaction a ribonucleoside 5'-phosphate + H2O = a ribonucleoside + phosphate. Its function is as follows. Nucleotidase that shows phosphatase activity on nucleoside 5'-monophosphates. This is 5'-nucleotidase SurE from Pseudomonas syringae pv. syringae (strain B728a).